Reading from the N-terminus, the 274-residue chain is Dermonecrotic toxin SdSicTox-betaIIB1bix (274 aa).

H5 is an active-site residue. Mg(2+) contacts are provided by E25 and D27. H41 serves as the catalytic Nucleophile. Disulfide bonds link C45/C51 and C47/C190. D85 serves as a coordination point for Mg(2+).

This sequence belongs to the arthropod phospholipase D family. Class II subfamily. It depends on Mg(2+) as a cofactor. In terms of tissue distribution, expressed by the venom gland.

The protein localises to the secreted. It catalyses the reaction an N-(acyl)-sphingosylphosphocholine = an N-(acyl)-sphingosyl-1,3-cyclic phosphate + choline. The enzyme catalyses an N-(acyl)-sphingosylphosphoethanolamine = an N-(acyl)-sphingosyl-1,3-cyclic phosphate + ethanolamine. It carries out the reaction a 1-acyl-sn-glycero-3-phosphocholine = a 1-acyl-sn-glycero-2,3-cyclic phosphate + choline. The catalysed reaction is a 1-acyl-sn-glycero-3-phosphoethanolamine = a 1-acyl-sn-glycero-2,3-cyclic phosphate + ethanolamine. In terms of biological role, dermonecrotic toxins cleave the phosphodiester linkage between the phosphate and headgroup of certain phospholipids (sphingolipid and lysolipid substrates), forming an alcohol (often choline) and a cyclic phosphate. This toxin acts on sphingomyelin (SM). It may also act on ceramide phosphoethanolamine (CPE), lysophosphatidylcholine (LPC) and lysophosphatidylethanolamine (LPE), but not on lysophosphatidylserine (LPS), and lysophosphatidylglycerol (LPG). It acts by transphosphatidylation, releasing exclusively cyclic phosphate products as second products. Induces dermonecrosis, hemolysis, increased vascular permeability, edema, inflammatory response, and platelet aggregation. This chain is Dermonecrotic toxin SdSicTox-betaIIB1bix, found in Sicarius cf. damarensis (strain GJB-2008) (Six-eyed sand spider).